Here is a 2344-residue protein sequence, read N- to C-terminus: Mucin-4 (2344 aa).

The signal sequence occupies residues 1–30 (MRGPHGVSWRVPWLCLSCLCSCLLLLPVNT). Residues 32–46 (TTSAPKTSTALPSST) show a composition bias toward low complexity. 5 disordered regions span residues 32–760 (TTSA…QGSI), 773–1036 (QKMS…TTST), 1072–1130 (VPSL…TPSV), 1171–1197 (STVA…MGAS), and 1233–1269 (SGLT…TVPP). The segment covering 47–100 (NPSQMTSQVSNPTASSYRMTKNTGQASPMVTSSSITTLPQSQHTGSMKTTRNPQ) has biased composition (polar residues). A variable number of tandem repeats (VNTR) region spans residues 81–1006 (ITTLPQSQHT…VSTLVTSTQE (926 aa)). Composition is skewed to low complexity over residues 101–116 (TTGT…ASSS) and 123–137 (TTSQ…TTTS). Thr133 carries O-linked (GalNAc...) threonine glycosylation. Polar residues predominate over residues 142–225 (ESSSPPSTSV…GGMKTTRNPQ (84 aa)). The span at 226-273 (TTGTTEVTTTLSASSSDHPTSSPESTPGNTAPRTTETSTTTTTKVLMT) shows a compositional bias: low complexity. Residues 274-305 (SLQQKLPTGSTLGTSTQELTTLPQSQHTGIMK) show a composition bias toward polar residues. 2 stretches are compositionally biased toward low complexity: residues 306-322 (TTSR…TTRT) and 335-349 (TSSQ…TTTS). Residues 373-436 (SGDTGHTMAV…GMKTTRNPQR (64 aa)) are compositionally biased toward polar residues. O-linked (GalNAc...) threonine glycans are attached at residues Thr391 and Thr392. Over residues 437 to 446 (TTPTEVTTST) the composition is skewed to low complexity. The span at 447–468 (LSASSSDQVQVETTSRATLSPD) shows a compositional bias: polar residues. Residues 469-492 (TTTTSHAPSVSSSSPSPPSTEGTS) are compositionally biased toward low complexity. Thr470 carries O-linked (GalNAc...) threonine glycosylation. Ser479 is a glycosylation site (O-linked (GalNAc...) serine). Residues 493 to 509 (VDTGLTTAVTTQDSTPA) are compositionally biased toward polar residues. A compositionally biased stretch (low complexity) spans 510–546 (TTQGSLTSSSQTLSTVSPLSTSTQETSTQELTSSQSQ). Over residues 547–580 (HTGSMKTTHNPQTTRNTEVTTTLSASSSDQVQVE) the composition is skewed to polar residues. The span at 581 to 594 (TTSQTTLSDATTTS) shows a compositional bias: low complexity. Positions 599-682 (ESSSPPSTSD…GGMKTTRNPQ (84 aa)) are enriched in polar residues. 2 stretches are compositionally biased toward low complexity: residues 683–698 (TTGT…ASSS) and 705–719 (TSSQ…TTTS). Polar residues-rich tracts occupy residues 724-760 (ESSS…QGSI) and 773-807 (QKMS…SSRP). A compositionally biased stretch (low complexity) spans 808–828 (QTTSVTSTLSSSPSGSTPVQT). The segment covering 829 to 868 (RSVTSSSDERTNPTSSGVSNTSPATTEVLTPTSSPESTPG) has biased composition (polar residues). The span at 869–915 (NTAPRTTETSTTTTTKVLMTSLQQKLPTGSTLGTSTPTEVTTTLSAS) shows a compositional bias: low complexity. Positions 916 to 994 (SSDQVQVETT…ISVTPSTQKM (79 aa)) are enriched in polar residues. A compositionally biased stretch (low complexity) spans 995–1015 (STVSTLVTSTQELTSSQSQRT). The segment covering 1016 to 1026 (GSMGTSSKPQA) has biased composition (polar residues). A compositionally biased stretch (low complexity) spans 1027-1036 (TTPTEVTTST). Positions 1072 to 1083 (VPSLMHSSKPQA) are enriched in polar residues. The span at 1084–1096 (TTPTEVTTSTLSS) shows a compositional bias: low complexity. Residues 1097-1116 (FSRGSTQTQTVSWETSSSGK) are compositionally biased toward polar residues. Composition is skewed to low complexity over residues 1118–1130 (TAPS…TPSV), 1175–1188 (HRQS…HSQS), and 1233–1267 (SGLT…RSTV). In terms of domain architecture, NIDO spans 1332-1492 (GHSGVMLISL…TGYTGRCGPT (161 aa)). Positions 1574 to 1597 (GRHRTGLAAGTTSPLSASSTSSGG) are disordered. Positions 1580–1597 (LAAGTTSPLSASSTSSGG) are enriched in low complexity. The region spanning 1609–1804 (RPAWTFGDPH…HYGMTSETNG (196 aa)) is the VWFD domain. Residues Asn1644, Asn1660, Asn1672, Asn1689, Asn1698, Asn1704, Asn1715, Asn1724, Asn1759, Asn1780, Asn1787, Asn1829, Asn1874, Asn1926, Asn1951, Asn1974, Asn1981, Asn2029, and Asn2048 are each glycosylated (N-linked (GlcNAc...) asparagine). Residues 2047–2086 (QNHSCPVNYCYNHGHCDISGPPDCQPTCTCAPAFTGNRCF) enclose the EGF-like 1 domain. 3 disulfide bridges follow: Cys2051–Cys2062, Cys2056–Cys2074, and Cys2076–Cys2085. N-linked (GlcNAc...) asparagine glycans are attached at residues Asn2114 and Asn2121. A helical transmembrane segment spans residues 2173-2193 (GPLIHYLNNQLISAVMEAFLL). The N-linked (GlcNAc...) asparagine glycan is linked to Asn2227. Residues 2256 to 2295 (VSPCSEGYCHNGGQCKHLPDGPQCTCATFSIYTSWGERCE) enclose the EGF-like 2 domain. 3 cysteine pairs are disulfide-bonded: Cys2259-Cys2270, Cys2264-Cys2279, and Cys2281-Cys2294. The helical transmembrane segment at 2301 to 2321 (LGAFFGILFGALGALLLLAIL) threads the bilayer.

As to quaternary structure, a heterodimeric complex, composed of a mucin-4 alpha chain and a cysteine-rich transmembrane mucin-4 beta chain. Mucin-4 beta chain interacts with ERBB2 via the EGF-like domain 1. In nonpolarized cells, associates with ERBB2 and ERBB3. Post-translationally, proteolytically cleaved into 2 subunits, mucin-4 alpha chain and mucin-4 beta chain. In terms of processing, mucin-4 alpha subunit is highly O-glycosylated. Mucin-4 beta subunit is predominantly N-glycosylated. As to expression, expression is developmentally regulated in the mammary gland, dramatically increases in the lactating gland compared with the virgin mammary gland, while decreasing again during mammary gland involution. Expressed in 13762 ascites cells. Overexpressed in some aggressive mammary tumors. Overexpression seems to block cell-cell and cell-matrix interactions to protect tumor cells from immune surveillance, and to promote metastasis.

It is found in the cell membrane. It localises to the secreted. Functionally, membrane-bound mucin, a family of highly glycosylated proteins that constitute the major component of the mucus, the slimy and viscous secretion covering epithelial surfaces. These glycoproteins play important roles in the protection of the epithelium and are implicated in epithelial renewal and differentiation. Regulates cellular behavior through both anti-adhesive effects on cell-cell and cell-extracellular matrix interactions and its ability to act as an intramembrane ligand for ERBB2. Plays an important role in proliferation and differentiation of epithelial cells by inducing specific phosphorylation of ERBB2. In polarized epithelial cells, segregates ERBB2 and other ERBB receptors and prevents ERBB2 from acting as a coreceptor. The interaction with ERBB2 leads to enhanced expression of CDKN1B. The formation of a MUC4-ERBB2-ERBB3-NRG1 complex leads to down-regulation of CDKN1B, resulting in repression of apoptosis and stimulation of proliferation. Its ability to promote tumor growth may be mainly due to repression of apoptosis as opposed to proliferation. This chain is Mucin-4 (Muc4), found in Rattus norvegicus (Rat).